Reading from the N-terminus, the 448-residue chain is 26S proteasome regulatory subunit 4 homolog (448 aa).

Residues 1-10 (MGQAQSGNFS) show a composition bias toward polar residues. The segment at 1–58 (MGQAQSGNFSNFGDGANGDNKKDQKKDKPKYEPPVPTRTGRRKKKAQSGPDASAKLPT) is disordered. The span at 19–31 (DNKKDQKKDKPKY) shows a compositional bias: basic and acidic residues. Position 232–239 (232–239 (GAPGTGKT)) interacts with ATP.

It belongs to the AAA ATPase family.

The protein localises to the cytoplasm. Its subcellular location is the nucleus. Its function is as follows. The 26S proteasome is involved in the ATP-dependent degradation of ubiquitinated proteins. The regulatory (or ATPase) complex confers ATP dependency and substrate specificity to the 26S complex. The polypeptide is 26S proteasome regulatory subunit 4 homolog (mts2) (Schizosaccharomyces pombe (strain 972 / ATCC 24843) (Fission yeast)).